The chain runs to 310 residues: MANPWWVGNVAIGGVESPVTSSAPSLHHRNSNNNNPPTMTRSDPRLDHDFTTNNSGSPNTQTQSQEEQNSRDEQPAVEPGSGSGSTGRRPRGRPPGSKNKPKSPVVVTKESPNSLQSHVLEIATGADVAESLNAFARRRGRGVSVLSGSGLVTNVTLRQPAASGGVVSLRGQFEILSMCGAFLPTSGSPAAAAGLTIYLAGAQGQVVGGGVAGPLIASGPVIVIAATFCNATYERLPIEEEQQQEQPLQLEDGKKQKEENDDNESGNNGNEGSMQPPMYNMPPNFIPNGHQMAQHDVYWGGPPPRAPPSY.

Disordered stretches follow at residues 15–112 and 239–310; these read VESP…KESP and EEEQ…PPSY. Composition is skewed to polar residues over residues 31–41 and 51–67; these read SNNNNPPTMTR and TTNN…SQEE. The a.T hook DNA-binding region spans 88–100; it reads RRPRGRPPGSKNK. The span at 94 to 104 shows a compositional bias: low complexity; that stretch reads PPGSKNKPKSP. Residues 112 to 251 form the PPC domain; the sequence is PNSLQSHVLE…QQQEQPLQLE (140 aa). Positions 301-310 are enriched in pro residues; it reads GPPPRAPPSY.

Its subcellular location is the nucleus. In terms of biological role, transcription factor that specifically binds AT-rich DNA sequences related to the nuclear matrix attachment regions (MARs). Binds the DNA sequence GNFEI (GA-negative feedback element I) in the GA3OX1 promoter. Negatively regulates plant innate immunity (PTI) to pathogens through the down-regulation of the PAMP-triggered FRK1 expression. This Arabidopsis thaliana (Mouse-ear cress) protein is AT-hook motif nuclear-localized protein 15.